The chain runs to 35 residues: Photosystem II reaction center protein T (35 aa).

Residues 3–23 (ALVYTFLLVSTLGIIFFAIFF) traverse the membrane as a helical segment.

It belongs to the PsbT family. In terms of assembly, PSII is composed of 1 copy each of membrane proteins PsbA, PsbB, PsbC, PsbD, PsbE, PsbF, PsbH, PsbI, PsbJ, PsbK, PsbL, PsbM, PsbT, PsbY, PsbZ, Psb30/Ycf12, at least 3 peripheral proteins of the oxygen-evolving complex and a large number of cofactors. It forms dimeric complexes.

Its subcellular location is the plastid. It is found in the chloroplast thylakoid membrane. Its function is as follows. Found at the monomer-monomer interface of the photosystem II (PS II) dimer, plays a role in assembly and dimerization of PSII. PSII is a light-driven water plastoquinone oxidoreductase, using light energy to abstract electrons from H(2)O, generating a proton gradient subsequently used for ATP formation. The chain is Photosystem II reaction center protein T from Saururus cernuus (Lizard's tail).